Consider the following 117-residue polypeptide: Probable prefoldin subunit 1 (117 aa).

Belongs to the prefoldin subunit beta family. Heterohexamer of two PFD-alpha type and four PFD-beta type subunits. As to expression, expressed in the distal cell tip of developing embryos.

Its subcellular location is the cytoplasm. Binds specifically to cytosolic chaperonin (c-CPN) and transfers target proteins to it. Binds to nascent polypeptide chain and promotes folding in an environment in which there are many competing pathways for nonnative proteins. Has a role in gonadogenesis. This is Probable prefoldin subunit 1 (pfd-1) from Caenorhabditis elegans.